We begin with the raw amino-acid sequence, 1136 residues long: Probable LRR receptor-like serine/threonine-protein kinase At4g36180 (1136 aa).

A signal peptide spans M1–A22. Residues D23–K751 lie on the Extracellular side of the membrane. LRR repeat units follow at residues M93 to C115, R117 to L139, S141 to S162, S163 to T186, Q187 to Q210, S211 to C233, S235 to A256, and K259 to C280. N-linked (GlcNAc...) asparagine glycosylation is found at N105 and N138. N-linked (GlcNAc...) asparagine glycosylation is found at N184, N192, and N232. 2 N-linked (GlcNAc...) asparagine glycosylation sites follow: N269 and N281. 18 LRR repeats span residues S283–A304, G309–N330, S333–L355, R357–C379, S381–M403, A405–N426, Q429–T452, S453–S479, F480–F500, K501–P524, N525–S546, S549–L571, L573–C595, A597–P620, R621–S643, S645–G666, N669–I691, and N694–R716. N365 carries N-linked (GlcNAc...) asparagine glycosylation. 8 N-linked (GlcNAc...) asparagine glycosylation sites follow: N441, N474, N477, N482, N511, N535, N554, and N594. N631 is a glycosylation site (N-linked (GlcNAc...) asparagine). 4 N-linked (GlcNAc...) asparagine glycosylation sites follow: N669, N679, N699, and N719. A helical transmembrane segment spans residues M752–F772. Residues Y773–A1136 lie on the Cytoplasmic side of the membrane. The tract at residues Q786 to E819 is disordered. Residues R799–T815 are compositionally biased toward low complexity. Phosphothreonine is present on residues T830 and T838. A Protein kinase domain is found at F841–V1123. Phosphotyrosine occurs at positions 915 and 1010.

This sequence belongs to the protein kinase superfamily. Ser/Thr protein kinase family.

It localises to the cell membrane. It carries out the reaction L-seryl-[protein] + ATP = O-phospho-L-seryl-[protein] + ADP + H(+). The catalysed reaction is L-threonyl-[protein] + ATP = O-phospho-L-threonyl-[protein] + ADP + H(+). The sequence is that of Probable LRR receptor-like serine/threonine-protein kinase At4g36180 from Arabidopsis thaliana (Mouse-ear cress).